The chain runs to 406 residues: LIM/homeobox protein Lhx1 (406 aa).

2 consecutive LIM zinc-binding domains span residues 4 to 54 (CAGC…CKND) and 63 to 117 (CAGC…CKED). Disordered regions lie at residues 128-189 (NSLH…TIKA) and 293-374 (YDFF…EVFG). The span at 137–148 (SDPSLSPDSQDP) shows a compositional bias: low complexity. The segment covering 151-167 (DDAKDSESANVSDKEGG) has biased composition (basic and acidic residues). At Ser162 the chain carries Phosphoserine. Positions 180 to 239 (RRGPRTTIKAKQLETLKAAFAATPKPTRHIREQLAQETGLNMRVIQVWFQNRRSKERRMK) form a DNA-binding region, homeobox. Over residues 315-327 (PSSGPSGTPLGGL) the composition is skewed to low complexity. Over residues 352-362 (GDSPSPEPSLP) the composition is skewed to pro residues.

In terms of assembly, interacts with LDB1 via the tandem LIM domains.

It is found in the nucleus. In terms of biological role, potential transcription factor. May play a role in early mesoderm formation and later in lateral mesoderm differentiation and neurogenesis. This chain is LIM/homeobox protein Lhx1 (LHX1), found in Saimiri boliviensis boliviensis (Bolivian squirrel monkey).